The chain runs to 148 residues: Lysozyme C-3 (148 aa).

The N-terminal stretch at 1-18 (MKTLLVLALLLLSVSVQA) is a signal peptide. One can recognise a C-type lysozyme domain in the interval 19 to 148 (KVYDRCEFAR…VSQYIRGCKL (130 aa)). Disulfide bonds link cysteine 24–cysteine 146, cysteine 48–cysteine 134, cysteine 83–cysteine 99, and cysteine 95–cysteine 113. Residues glutamate 53 and aspartate 71 contribute to the active site.

It belongs to the glycosyl hydrolase 22 family. In terms of assembly, monomer.

The protein localises to the secreted. It catalyses the reaction Hydrolysis of (1-&gt;4)-beta-linkages between N-acetylmuramic acid and N-acetyl-D-glucosamine residues in a peptidoglycan and between N-acetyl-D-glucosamine residues in chitodextrins.. In terms of biological role, lysozymes have primarily a bacteriolytic function; those in tissues and body fluids are associated with the monocyte-macrophage system and enhance the activity of immunoagents. The sequence is that of Lysozyme C-3 from Sus scrofa (Pig).